The chain runs to 633 residues: Keratin, type II cytoskeletal 2 epidermal (633 aa).

The interval 1-189 is head; sequence MSCQISCKSR…DPEIQNVKSQ (189 aa). At Arg-18 the chain carries Asymmetric dimethylarginine. Ser-21, Ser-24, and Ser-60 each carry phosphoserine. Positions 190-225 are coil 1A; that stretch reads EREQIKTLNNKFASFIDKVRFLEQQNQVLQTKWELL. Residues 190 to 503 enclose the IF rod domain; sequence EREQIKTLNN…KLLEGEECRM (314 aa). Residues 226–244 are linker 1; that stretch reads QQLDVSTRTTNLEPIFQAY. The interval 245–336 is coil 1B; sequence IAKLKKYVDT…FLFDXELSQM (92 aa). A linker 12 region spans residues 337–360; sequence QTQISETNVTLSMDNNRSLDLDSI. The coil 2 stretch occupies residues 361-499; it reads ISEVKAQYEE…ATYRKLLEGE (139 aa). The segment at 500-633 is tail; the sequence is ECRMSGDLSS…SGSSVTFSFR (134 aa). A compositionally biased stretch (low complexity) spans 518–527; the sequence is SSMSSSMTSR. Positions 518 to 633 are disordered; it reads SSMSSSMTSR…SGSSVTFSFR (116 aa). The segment covering 528–613 has biased composition (gly residues); sequence GGFGGYGSGG…GYGSGGGSRG (86 aa). 2 positions are modified to omega-N-methylarginine: Arg-588 and Arg-612.

The protein belongs to the intermediate filament family. In terms of assembly, heterotetramer of two type I and two type II keratins. Associates with KRT10.

Its subcellular location is the cytoplasm. In terms of biological role, probably contributes to terminal cornification. Associated with keratinocyte activation, proliferation and keratinization. Required for maintenance of corneocytes and keratin filaments in suprabasal keratinocytes in the epidermis of the ear, potentially via moderation of expression and localization of keratins and their partner proteins. Plays a role in the establishment of the epidermal barrier on plantar skin. The protein is Keratin, type II cytoskeletal 2 epidermal (KRT2) of Canis lupus familiaris (Dog).